Here is a 671-residue protein sequence, read N- to C-terminus: MANPNNNNDNKQNNNNNFFNDNPLLAFAIFSIVIILIFKSFVGEGESLGTMMNTQGVAQTKQVKYSEIKKRIEEGAVKSVKLTPSMVEAIIEDNGRKVRYVAQNVPTYDRDLIPLLDKKKISYEGVVGNGFFSELISMMLPILIFFAIWIFLAKKMSKGMGGGILGAGKADKLINSEKPDTRFDDVQGVEEAKDEVKEIVDFLKFPERYIELGAKIPKGVLLVGPPGTGKTLLAKAVAGEASVPFFSVSGSGFIEMFVGVGASRVRDLFAQAKKEAPSIIFIDEIDAIGKSRASGGQMGGNDEREQTLNQLLAEMDGFGTDTPVIVLAATNRPETLDAALLRAGRFDRQVLVDKPDFEGRLAILKVHSKDVKLAPNVDLEIVAKQTAGLAGADLANIINEAALLAGRQNKKQIEQSDLLEAIERSFVGLEKKNRKINETEKKIVAYHESGHALMSELSEGATRVTKVSIIPRGLGALGYTLHLPEDEERFLKQKHELMAEVDVLLGGRAAEDVFIGEISTGAGNDLDRATAILKDMVSVYGMTDVAGLMVLSRSQNSFLGAGAVSTDYSDKTAEAMDSYIKSTLNERYGYVKETLQNYYGAIDNMAKELLGTEVIEGKTVRRIIEEYEQEKGMPSRLAHKDKVAKNKAEADKKEEALKKEISEESDNNKEA.

Topologically, residues 1 to 22 (MANPNNNNDNKQNNNNNFFNDN) are cytoplasmic. A helical membrane pass occupies residues 23 to 43 (PLLAFAIFSIVIILIFKSFVG). The Periplasmic segment spans residues 44-130 (EGESLGTMMN…ISYEGVVGNG (87 aa)). Residues 131-151 (FFSELISMMLPILIFFAIWIF) form a helical membrane-spanning segment. Residues 152-671 (LAKKMSKGMG…SEESDNNKEA (520 aa)) are Cytoplasmic-facing. 224–231 (GPPGTGKT) provides a ligand contact to ATP. Position 447 (H447) interacts with Zn(2+). E448 is an active-site residue. H451 and D525 together coordinate Zn(2+). Residues 630-671 (EKGMPSRLAHKDKVAKNKAEADKKEEALKKEISEESDNNKEA) form a disordered region.

In the central section; belongs to the AAA ATPase family. The protein in the C-terminal section; belongs to the peptidase M41 family. Homohexamer. It depends on Zn(2+) as a cofactor.

The protein resides in the cell inner membrane. In terms of biological role, acts as a processive, ATP-dependent zinc metallopeptidase for both cytoplasmic and membrane proteins. Plays a role in the quality control of integral membrane proteins. The protein is ATP-dependent zinc metalloprotease FtsH of Sulfurovum sp. (strain NBC37-1).